A 549-amino-acid chain; its full sequence is Tight junction-associated protein 1 (549 aa).

Positions 1–34 are disordered; sequence MSSAAPAKKPYRKAPPEHRELRLEIPVSRLEQEE. Over residues 14–23 the composition is skewed to basic and acidic residues; sequence APPEHRELRL. Residues 42–171 are a coiled coil; that stretch reads MKLLQQENEE…EELNERYRLD (130 aa). Disordered stretches follow at residues 207 to 226 and 266 to 322; these read RSGQ…LSPG and VDMS…PLYP. The residue at position 295 (Ser295) is a Phosphoserine. Positions 311–320 are enriched in pro residues; that stretch reads YPTPSPPHPL. Thr313 carries the post-translational modification Phosphothreonine. Phosphoserine occurs at positions 315 and 340. Disordered regions lie at residues 359–404, 410–429, and 434–549; these read EDGS…SEED, QRAF…RTAF, and LPEL…TVLS. Polar residues predominate over residues 369 to 383; the sequence is SVPSSPASAQGSPHH. Positions 389–400 are enriched in low complexity; the sequence is PSALSAPASSAS. Position 417 is a phosphothreonine (Thr417). Residue Ser483 is modified to Phosphoserine. Residues 485 to 498 show a composition bias toward basic and acidic residues; the sequence is EEERQSLLPDKEGT. Positions 522–534 are enriched in basic residues; the sequence is RSPKRMGVHHLHR. Ser537 carries the post-translational modification Phosphoserine. The segment covering 538–549 has biased composition (polar residues); sequence LTQAQEQGTVLS.

As to quaternary structure, interacts with DLG1. Interacts with ARF6 (GTP-bound form). Widely expressed including in adult thymus, heart, lung, liver, small intestine, kidney, spleen, testis and skeletal muscle and in embryonic brain but not detected in adult brain (at protein level).

The protein resides in the golgi apparatus. It is found in the trans-Golgi network. It localises to the cell junction. Its subcellular location is the tight junction. The protein localises to the cell membrane. In terms of biological role, plays a role in regulating the structure of the Golgi apparatus. The polypeptide is Tight junction-associated protein 1 (Mus musculus (Mouse)).